The sequence spans 96 residues: Large ribosomal subunit protein bL21 (96 aa).

The protein belongs to the bacterial ribosomal protein bL21 family. Part of the 50S ribosomal subunit. Contacts protein L20.

This protein binds to 23S rRNA in the presence of protein L20. This is Large ribosomal subunit protein bL21 from Chlorobium chlorochromatii (strain CaD3).